Consider the following 478-residue polypeptide: Protein nucleotidyltransferase YdiU (478 aa).

ATP-binding residues include Gly84, Gly86, Arg87, Lys107, Asp119, Gly120, Arg170, and Arg177. Asp246 acts as the Proton acceptor in catalysis. Mg(2+) contacts are provided by Asn247 and Asp256. ATP is bound at residue Asp256.

This sequence belongs to the SELO family. The cofactor is Mg(2+). Mn(2+) serves as cofactor.

It catalyses the reaction L-seryl-[protein] + ATP = 3-O-(5'-adenylyl)-L-seryl-[protein] + diphosphate. It carries out the reaction L-threonyl-[protein] + ATP = 3-O-(5'-adenylyl)-L-threonyl-[protein] + diphosphate. The catalysed reaction is L-tyrosyl-[protein] + ATP = O-(5'-adenylyl)-L-tyrosyl-[protein] + diphosphate. The enzyme catalyses L-histidyl-[protein] + UTP = N(tele)-(5'-uridylyl)-L-histidyl-[protein] + diphosphate. It catalyses the reaction L-seryl-[protein] + UTP = O-(5'-uridylyl)-L-seryl-[protein] + diphosphate. It carries out the reaction L-tyrosyl-[protein] + UTP = O-(5'-uridylyl)-L-tyrosyl-[protein] + diphosphate. Its function is as follows. Nucleotidyltransferase involved in the post-translational modification of proteins. It can catalyze the addition of adenosine monophosphate (AMP) or uridine monophosphate (UMP) to a protein, resulting in modifications known as AMPylation and UMPylation. The polypeptide is Protein nucleotidyltransferase YdiU (Shigella boydii serotype 18 (strain CDC 3083-94 / BS512)).